Consider the following 424-residue polypeptide: Histidine--tRNA ligase (424 aa).

Belongs to the class-II aminoacyl-tRNA synthetase family. In terms of assembly, homodimer.

It localises to the cytoplasm. The catalysed reaction is tRNA(His) + L-histidine + ATP = L-histidyl-tRNA(His) + AMP + diphosphate + H(+). The chain is Histidine--tRNA ligase from Salmonella gallinarum (strain 287/91 / NCTC 13346).